The following is a 101-amino-acid chain: Apolipoprotein C-II (101 aa).

The signal sequence occupies residues 1–22 (MGIRYLLVLVLVLLVLGCEVQG). The propeptide occupies 23–28 (AHMPQQ). A lipid binding region spans residues 66–74 (TMDEKIREI). The tract at residues 78–101 (STAAVSTYAGIFTDQLLSMLKGDQ) is lipoprotein lipase cofactor.

Belongs to the apolipoprotein C2 family. Proapolipoprotein C-II is synthesized as a sialic acid containing glycoprotein which is subsequently desialylated prior to its proteolytic processing. Post-translationally, proapolipoprotein C-II, the major form found in plasma undergoes proteolytic cleavage of its N-terminal hexapeptide to generate apolipoprotein C-II, which occurs as the minor form in plasma.

The protein resides in the secreted. In terms of biological role, component of chylomicrons, very low-density lipoproteins (VLDL), low-density lipoproteins (LDL), and high-density lipoproteins (HDL) in plasma. Plays an important role in lipoprotein metabolism as an activator of lipoprotein lipase. Both proapolipoprotein C-II and apolipoprotein C-II can activate lipoprotein lipase. In Neomonachus schauinslandi (Hawaiian monk seal), this protein is Apolipoprotein C-II (APOC2).